Consider the following 491-residue polypeptide: Anthranilate synthase component 1 (491 aa).

L-tryptophan-binding positions include S49 and 271–273 (PYL). 306 to 307 (GT) contacts chorismate. Residue E333 coordinates Mg(2+). Chorismate contacts are provided by residues Y421, R441, 455–457 (GAG), and G457. A Mg(2+)-binding site is contributed by E470.

The protein belongs to the anthranilate synthase component I family. As to quaternary structure, heterotetramer consisting of two non-identical subunits: a beta subunit (TrpG) and a large alpha subunit (TrpE). The cofactor is Mg(2+).

The enzyme catalyses chorismate + L-glutamine = anthranilate + pyruvate + L-glutamate + H(+). The protein operates within amino-acid biosynthesis; L-tryptophan biosynthesis; L-tryptophan from chorismate: step 1/5. Feedback inhibited by tryptophan. Functionally, part of a heterotetrameric complex that catalyzes the two-step biosynthesis of anthranilate, an intermediate in the biosynthesis of L-tryptophan. In the first step, the glutamine-binding beta subunit (TrpG) of anthranilate synthase (AS) provides the glutamine amidotransferase activity which generates ammonia as a substrate that, along with chorismate, is used in the second step, catalyzed by the large alpha subunit of AS (TrpE) to produce anthranilate. In the absence of TrpG, TrpE can synthesize anthranilate directly from chorismate and high concentrations of ammonia. This chain is Anthranilate synthase component 1 (trpE), found in Neisseria gonorrhoeae (strain ATCC 700825 / FA 1090).